The chain runs to 246 residues: E3 ubiquitin-protein ligase MARCHF2 (246 aa).

Residues 56–116 (DSQSDCPFCR…ELCHTEFAVE (61 aa)) form an RING-CH-type zinc finger. Zn(2+) contacts are provided by Cys64, Cys67, Cys80, Cys82, His90, Cys93, Cys106, and Cys109. The required for interaction with IKBKG stretch occupies residues 121–246 (PLTEWLKDPG…LKKVAEETPV (126 aa)). The next 2 helical transmembrane spans lie at 138–158 (LCCDMVCFVFITPLAAISGWL) and 175–195 (AVGLIALTIALFTIYVLWTLV).

As to quaternary structure, interacts with STX6; the interaction promotes MARCHF2-mediated ubiquitination and degradation of CFTR. Interacts with MARCHF3. Interacts with GOPC/CAL; the interaction leads to CFTR ubiquitination and degradation. Interacts with CFTR; the interaction leads to CFTR ubiqtuitination and degradation. Interacts (via PDZ domain) with DLG1 (via PDZ domains); the interaction leads to DLG1 ubiqtuitination and degradation. Interacts with ERGIC3. Interacts with ADRB2. Interacts with IKBKG/NEMO; during the late stages of macrophage viral and bacterial infection; the interaction leads to ubiquitination and degradation of IKBKG/NEMO.

Its subcellular location is the endoplasmic reticulum membrane. It is found in the lysosome membrane. The protein localises to the endosome membrane. It localises to the golgi apparatus membrane. The protein resides in the cytoplasm. Its subcellular location is the cell membrane. It catalyses the reaction S-ubiquitinyl-[E2 ubiquitin-conjugating enzyme]-L-cysteine + [acceptor protein]-L-lysine = [E2 ubiquitin-conjugating enzyme]-L-cysteine + N(6)-ubiquitinyl-[acceptor protein]-L-lysine.. The protein operates within protein modification; protein ubiquitination. Its function is as follows. E3 ubiquitin-protein ligase that may mediate ubiquitination of TFRC and CD86, and promote their subsequent endocytosis and sorting to lysosomes via multivesicular bodies. E3 ubiquitin ligases accept ubiquitin from an E2 ubiquitin-conjugating enzyme in the form of a thioester and then directly transfer the ubiquitin to targeted substrates. Together with GOPC/CAL mediates the ubiquitination and lysosomal degradation of CFTR. Ubiquitinates and therefore mediates the degradation of DLG1. Regulates the intracellular trafficking and secretion of alpha1-antitrypsin/SERPINA1 and HP/haptoglobin via ubiquitination and degradation of the cargo receptor ERGIC3. Negatively regulates the antiviral and antibacterial immune response by repression of the NF-kB and type 1 IFN signaling pathways, via MARCHF2-mediated K48-linked polyubiquitination of IKBKG/NEMO, resulting in its proteasomal degradation. May be involved in endosomal trafficking through interaction with STX6. The polypeptide is E3 ubiquitin-protein ligase MARCHF2 (Marchf2) (Mus musculus (Mouse)).